A 466-amino-acid chain; its full sequence is Cytochrome P450 85A1 (466 aa).

A helical membrane pass occupies residues 1–21 (MVLAVLIGVLVGIVLVSSLLL). Position 416 (Cys-416) interacts with heme.

This sequence belongs to the cytochrome P450 family. The cofactor is heme.

Its subcellular location is the membrane. It catalyses the reaction 6-deoxoteasterone + reduced [NADPH--hemoprotein reductase] + O2 = 6alpha-hydroxyteasterone + oxidized [NADPH--hemoprotein reductase] + H2O + H(+). The enzyme catalyses 6alpha-hydroxytyphasterol + reduced [NADPH--hemoprotein reductase] + O2 = teasterone + oxidized [NADPH--hemoprotein reductase] + 2 H2O + H(+). The catalysed reaction is 3-dehydro-6-deoxoteasterone + reduced [NADPH--hemoprotein reductase] + O2 = 3-dehydro-6alpha-hydroxyteasterone + oxidized [NADPH--hemoprotein reductase] + H2O + H(+). It carries out the reaction 3-dehydro-6alpha-hydroxyteasterone + reduced [NADPH--hemoprotein reductase] + O2 = 3-dehydroteasterone + oxidized [NADPH--hemoprotein reductase] + 2 H2O + H(+). It catalyses the reaction 6-deoxotyphasterol + reduced [NADPH--hemoprotein reductase] + O2 = 6alpha-hydroxytyphasterol + oxidized [NADPH--hemoprotein reductase] + H2O + H(+). The enzyme catalyses 6alpha-hydroxytyphasterol + reduced [NADPH--hemoprotein reductase] + O2 = typhasterol + oxidized [NADPH--hemoprotein reductase] + 2 H2O + H(+). The catalysed reaction is 6-deoxocastasterone + reduced [NADPH--hemoprotein reductase] + O2 = 6alpha-hydroxycastasterone + oxidized [NADPH--hemoprotein reductase] + H2O + H(+). It carries out the reaction 6alpha-hydroxycastasterone + reduced [NADPH--hemoprotein reductase] + O2 = castasterone + oxidized [NADPH--hemoprotein reductase] + 2 H2O + H(+). It catalyses the reaction 3-dehydro-6-deoxoteasterone + 2 reduced [NADPH--hemoprotein reductase] + 2 O2 = 3-dehydroteasterone + 2 oxidized [NADPH--hemoprotein reductase] + 3 H2O + 2 H(+). The enzyme catalyses 6-deoxocastasterone + 2 reduced [NADPH--hemoprotein reductase] + 2 O2 = castasterone + 2 oxidized [NADPH--hemoprotein reductase] + 3 H2O + 2 H(+). The catalysed reaction is 6-deoxoteasterone + 2 reduced [NADPH--hemoprotein reductase] + 2 O2 = teasterone + 2 oxidized [NADPH--hemoprotein reductase] + 3 H2O + 2 H(+). It carries out the reaction 6-deoxotyphasterol + 2 reduced [NADPH--hemoprotein reductase] + 2 O2 = typhasterol + 2 oxidized [NADPH--hemoprotein reductase] + 3 H2O + 2 H(+). Its pathway is plant hormone biosynthesis; brassinosteroid biosynthesis. In terms of biological role, involved in reduction steps of the biosynthesis of plant campesterol-derivative steroids, ending to castasterone (CS) but missing brassinolide (BL). Catalyzes the C6-oxidation step in brassinosteroids biosynthesis; the conversion of 6-deoxoteasterone (6-deoxoTE) to teasterone (TE), 3-dehydro-6-deoxoteasterone (6-deoxo3DT, 6-deoxo-3-DHT) to 3-dehydroteasterone (3DT, 3-DHT), 6-deoxotyphasterol (6-deoxoTY) to typhasterol (TY) and of 6-deoxocastasterone (6-deoxoCS) to castasterone (CS). The protein is Cytochrome P450 85A1 of Brachypodium distachyon (Purple false brome).